The following is a 32-amino-acid chain: Ranatuerin-2Lb (32 aa).

An intrachain disulfide couples Cys-27 to Cys-32.

As to expression, expressed by the skin glands.

It is found in the secreted. Functionally, antibacterial activity against Gram-positive bacterium S.aureus and Gram-negative bacterium E.coli. Has activity against C.albicans. In Rana luteiventris (Columbia spotted frog), this protein is Ranatuerin-2Lb.